Reading from the N-terminus, the 711-residue chain is Amino-acid racemase (711 aa).

Residues 1–14 (MTKNESYSGIDYFR) lie on the Cytoplasmic side of the membrane. A helical membrane pass occupies residues 15–35 (FIAALLIVAIHTSPLFSFSET). Residues 36–37 (GN) are Extracellular-facing. The chain crosses the membrane as a helical span at residues 38–58 (FIFTRIVAPVAVPFFFMTSGF). The Cytoplasmic segment spans residues 59–78 (FLISRYTCNAEKLGAFIKKT). Residues 79–99 (TLIYGVAILLYIPINVYNGYF) form a helical membrane-spanning segment. Over 100–117 (KMDNLLPNIIKDIVFDGT) the chain is Extracellular. The chain crosses the membrane as a helical span at residues 118–138 (LYHLWYLPASIIGAAIAWYLV). The Cytoplasmic segment spans residues 139-146 (KKVHYRKA). The helical transmembrane segment at 147–167 (FLIASILYIIGLFGDSYYGIV) threads the bilayer. The Extracellular segment spans residues 168 to 188 (KSVSCLNVFYNLIFQLTDYTR). A helical transmembrane segment spans residues 189 to 209 (NGIFFAPIFFVLGGYISDSPN). At 210 to 241 (RYRKKNYIRIYSLFCLMFGKTLTLQHFDIQKH) the chain is on the cytoplasmic side. The helical transmembrane segment at 242 to 262 (DSMYVLLLPSVWCLFNLLLHF) threads the bilayer. At 263–306 (RGKRRTGLRTISLDQLYHSSVYDCCNTIVCAELLHLQSLLVENS) the chain is on the extracellular side. The helical transmembrane segment at 307-327 (LVHYIAVCFASVVLAVVITAL) threads the bilayer. Over 328 to 711 (LSSLKPKKAK…EHRLNIIRRA (384 aa)) the chain is Cytoplasmic. The racemase stretch occupies residues 336 to 711 (AKHTADTDRA…EHRLNIIRRA (376 aa)). The active-site Proton acceptor is Lys376. The residue at position 376 (Lys376) is an N6-(pyridoxal phosphate)lysine. Residue Arg470 participates in substrate binding. Tyr602 acts as the Proton acceptor in catalysis. Met651 serves as a coordination point for substrate.

In the N-terminal section; belongs to the acyltransferase 3 family. The protein in the C-terminal section; belongs to the alanine racemase family. Pyridoxal 5'-phosphate serves as cofactor.

The protein resides in the cell membrane. In Enterococcus faecalis (Streptococcus faecalis), this protein is Amino-acid racemase (vanTG).